We begin with the raw amino-acid sequence, 341 residues long: Holliday junction branch migration complex subunit RuvB (341 aa).

The large ATPase domain (RuvB-L) stretch occupies residues 1-182 (MTSSDPTLRP…FGIPTRLQFY (182 aa)). ATP contacts are provided by residues leucine 21, arginine 22, glycine 63, lysine 66, threonine 67, threonine 68, 129–131 (EDF), arginine 172, tyrosine 182, and arginine 219. Residue threonine 67 coordinates Mg(2+). Residues 183–253 (TEDELDLIVA…IADRALTRLG (71 aa)) are small ATPAse domain (RuvB-S). The tract at residues 256–341 (HLGLDLGDRR…KGPGQSDLFG (86 aa)) is head domain (RuvB-H). The DNA site is built by arginine 292, arginine 311, and arginine 316.

It belongs to the RuvB family. Homohexamer. Forms an RuvA(8)-RuvB(12)-Holliday junction (HJ) complex. HJ DNA is sandwiched between 2 RuvA tetramers; dsDNA enters through RuvA and exits via RuvB. An RuvB hexamer assembles on each DNA strand where it exits the tetramer. Each RuvB hexamer is contacted by two RuvA subunits (via domain III) on 2 adjacent RuvB subunits; this complex drives branch migration. In the full resolvosome a probable DNA-RuvA(4)-RuvB(12)-RuvC(2) complex forms which resolves the HJ.

It localises to the cytoplasm. It carries out the reaction ATP + H2O = ADP + phosphate + H(+). In terms of biological role, the RuvA-RuvB-RuvC complex processes Holliday junction (HJ) DNA during genetic recombination and DNA repair, while the RuvA-RuvB complex plays an important role in the rescue of blocked DNA replication forks via replication fork reversal (RFR). RuvA specifically binds to HJ cruciform DNA, conferring on it an open structure. The RuvB hexamer acts as an ATP-dependent pump, pulling dsDNA into and through the RuvAB complex. RuvB forms 2 homohexamers on either side of HJ DNA bound by 1 or 2 RuvA tetramers; 4 subunits per hexamer contact DNA at a time. Coordinated motions by a converter formed by DNA-disengaged RuvB subunits stimulates ATP hydrolysis and nucleotide exchange. Immobilization of the converter enables RuvB to convert the ATP-contained energy into a lever motion, pulling 2 nucleotides of DNA out of the RuvA tetramer per ATP hydrolyzed, thus driving DNA branch migration. The RuvB motors rotate together with the DNA substrate, which together with the progressing nucleotide cycle form the mechanistic basis for DNA recombination by continuous HJ branch migration. Branch migration allows RuvC to scan DNA until it finds its consensus sequence, where it cleaves and resolves cruciform DNA. This chain is Holliday junction branch migration complex subunit RuvB, found in Cereibacter sphaeroides (strain ATCC 17029 / ATH 2.4.9) (Rhodobacter sphaeroides).